The sequence spans 456 residues: tRNA-2-methylthio-N(6)-dimethylallyladenosine synthase (456 aa).

The MTTase N-terminal domain maps to 17–135 (KLYLIQSFGC…LPRMIHQVQE (119 aa)). [4Fe-4S] cluster-binding residues include cysteine 26, cysteine 62, cysteine 96, cysteine 172, cysteine 176, and cysteine 179. Residues 158–387 (RKDKLKAWVT…IELQNLISLE (230 aa)) form the Radical SAM core domain. The 64-residue stretch at 390–453 (QREEGRVLEV…PNLLEGEVVP (64 aa)) folds into the TRAM domain.

It belongs to the methylthiotransferase family. MiaB subfamily. Monomer. Requires [4Fe-4S] cluster as cofactor.

Its subcellular location is the cytoplasm. It catalyses the reaction N(6)-dimethylallyladenosine(37) in tRNA + (sulfur carrier)-SH + AH2 + 2 S-adenosyl-L-methionine = 2-methylsulfanyl-N(6)-dimethylallyladenosine(37) in tRNA + (sulfur carrier)-H + 5'-deoxyadenosine + L-methionine + A + S-adenosyl-L-homocysteine + 2 H(+). Its function is as follows. Catalyzes the methylthiolation of N6-(dimethylallyl)adenosine (i(6)A), leading to the formation of 2-methylthio-N6-(dimethylallyl)adenosine (ms(2)i(6)A) at position 37 in tRNAs that read codons beginning with uridine. This is tRNA-2-methylthio-N(6)-dimethylallyladenosine synthase from Desulforamulus reducens (strain ATCC BAA-1160 / DSM 100696 / MI-1) (Desulfotomaculum reducens).